The primary structure comprises 612 residues: Methionine--tRNA ligase (612 aa).

The 'HIGH' region signature appears at 12–22; sequence PYANGPRHIGH. Zn(2+) is bound by residues C144, C147, C157, and C160. The 'KMSKS' region signature appears at 350–354; that stretch reads KFSSS. S353 contributes to the ATP binding site. Residues 580–612 form a disordered region; it reads IQPGTQLSKPKPLFPKLDPELAETGPEWAPVQK.

The protein belongs to the class-I aminoacyl-tRNA synthetase family. MetG type 1 subfamily. Monomer. It depends on Zn(2+) as a cofactor.

It localises to the cytoplasm. The enzyme catalyses tRNA(Met) + L-methionine + ATP = L-methionyl-tRNA(Met) + AMP + diphosphate. Is required not only for elongation of protein synthesis but also for the initiation of all mRNA translation through initiator tRNA(fMet) aminoacylation. The sequence is that of Methionine--tRNA ligase from Corynebacterium jeikeium (strain K411).